Consider the following 366-residue polypeptide: Prostaglandin F2-alpha receptor (366 aa).

The Extracellular portion of the chain corresponds to M1–F31. 2 N-linked (GlcNAc...) asparagine glycosylation sites follow: N4 and N19. A helical transmembrane segment spans residues F32 to Y55. The Cytoplasmic segment spans residues Q56–L69. Residues A70–F90 traverse the membrane as a helical segment. The Extracellular portion of the chain corresponds to V91–S109. C108 and C186 form a disulfide bridge. Residues I110–I131 form a helical membrane-spanning segment. Topologically, residues E132–V152 are cytoplasmic. Residues K153–R175 form a helical membrane-spanning segment. The Extracellular segment spans residues D176 to D198. The helical transmembrane segment at R199–G224 threads the bilayer. The Cytoplasmic portion of the chain corresponds to V225–Q250. Residues L251 to V267 form a helical membrane-spanning segment. The Extracellular segment spans residues T268–T285. The helical transmembrane segment at T286–L307 threads the bilayer. Over R308 to L366 the chain is Cytoplasmic.

It belongs to the G-protein coupled receptor 1 family.

It localises to the cell membrane. Functionally, receptor for prostaglandin F2-alpha (PGF2-alpha). The activity of this receptor is mediated by G proteins which activate a phosphatidylinositol-calcium second messenger system. Initiates luteolysis in the corpus luteum. In Mus musculus (Mouse), this protein is Prostaglandin F2-alpha receptor (Ptgfr).